A 200-amino-acid polypeptide reads, in one-letter code: UPF0329 protein ECU06_1670 (200 aa).

This sequence belongs to the UPF0329 family.

This chain is UPF0329 protein ECU06_1670, found in Encephalitozoon cuniculi (strain GB-M1) (Microsporidian parasite).